We begin with the raw amino-acid sequence, 146 residues long: Protein E6 (146 aa).

Zinc fingers lie at residues 27–63 (CIFCAKVLTTAELSAFALRELNVVWRTGAPYGACARC) and 100–136 (CYMCHKPLVKEEKDRHRNERRRLHCIAGYWRGSCQYC).

This sequence belongs to the papillomaviridae E6 protein family. Forms homodimers. Interacts with ubiquitin-protein ligase UBE3A/E6-AP; this interaction stimulates UBE3A ubiquitin activity. Interacts with host TP53 and EP300; this interaction inhibits TP53 activity.

The protein localises to the host cytoplasm. The protein resides in the host nucleus. In terms of biological role, plays a major role in the induction and maintenance of cellular transformation. E6 associates with host UBE3A/E6-AP ubiquitin-protein ligase and modulates its activity. Sequesters tumor suppressor TP53 in the host cytoplasm and modulates its activity by interacting with host EP300 that results in the reduction of TP53 acetylation and activation. In turn, apoptosis induced by DNA damage is inhibited. E6 also protects host keratinocytes from apoptosis by mediating the degradation of host BAK1. May also inhibit host immune response. This Homo sapiens (Human) protein is Protein E6.